A 1012-amino-acid polypeptide reads, in one-letter code: Tolloid-like protein 2 (1012 aa).

Positions 1 to 21 (MPLATTLGTLVLLLLLPLPRG) are cleaved as a signal peptide. Positions 22–146 (AEVTGDHSNV…AKTFSARVRR (125 aa)) are excised as a propeptide. The interval 83–135 (KPSIDKPGHDTGGLEETSARWPNDTASNASIQAPRKDGKDATTFLPNPGTSNT) is disordered. Residues 126–135 (FLPNPGTSNT) show a composition bias toward polar residues. Residues 146–346 (RATTSRTERI…AQARKLYKCP (201 aa)) form the Peptidase M12A domain. N-linked (GlcNAc...) asparagine glycosylation is present at N168. Cystine bridges form between C189-C345, C209-C231, C211-C212, and C348-C374. H239 serves as a coordination point for Zn(2+). E240 is a catalytic residue. Zn(2+) contacts are provided by H243 and H249. CUB domains lie at 348–460 (CGET…YEAM) and 461–573 (CGGD…FFKE). N-linked (GlcNAc...) asparagine glycans are attached at residues N358 and N389. Intrachain disulfides connect C401-C423, C461-C487, C514-C536, C577-C589, C585-C598, C600-C613, C617-C643, C670-C692, C733-C744, C740-C753, C755-C768, and C773-C799. The EGF-like 1; calcium-binding domain maps to 573 to 614 (EVDECSWPDHGGCEQRCVNTLGSYTCACDPGYELAADKKTCE). The region spanning 617 to 729 (CGGFITKLNG…RGFRAHFFSD (113 aa)) is the CUB 3 domain. N-linked (GlcNAc...) asparagine glycosylation occurs at N625. Residues 729–769 (DKDECAKDNGGCQQECVNTFGSYLCRCRNGYRLHENGHDCK) enclose the EGF-like 2; calcium-binding domain. CUB domains follow at residues 773–885 (CAYK…HSTE) and 886–1002 (CGGR…YTST). N802 is a glycosylation site (N-linked (GlcNAc...) asparagine). 3 disulfides stabilise this stretch: C826–C848, C886–C916, and C943–C965. 2 positions are modified to omega-N-methylarginine: R960 and R963.

Zn(2+) serves as cofactor.

Its subcellular location is the secreted. Its function is as follows. Protease which specifically processes pro-lysyl oxidase. Required for the embryonic development. Predominant protease, which in the development, influences dorsal-ventral patterning and skeletogenesis. This is Tolloid-like protein 2 (Tll2) from Mus musculus (Mouse).